Here is a 77-residue protein sequence, read N- to C-terminus: Putative antitoxin VapB24 (77 aa).

Its function is as follows. Possibly the antitoxin component of a type II toxin-antitoxin (TA) system. Its cognate toxin is VapC24 (Potential). The polypeptide is Putative antitoxin VapB24 (vapB24) (Mycobacterium tuberculosis (strain CDC 1551 / Oshkosh)).